The chain runs to 165 residues: V-type proton ATPase subunit c2 (165 aa).

The Lumenal segment spans residues 1–12; the sequence is MASTFSGDETAP. Residues 13-33 form a helical membrane-spanning segment; the sequence is FFGFLGAAAALVFSCMGAAYG. At 34–55 the chain is on the cytoplasmic side; sequence TAKSGVGVASMGVMRPELVMKS. Residues 56 to 76 traverse the membrane as a helical segment; that stretch reads IVPVVMAGVLGIYGLIIAVII. Residues 77-95 are Lumenal-facing; sequence STGINPKAKSYYLFDGYAH. The chain crosses the membrane as a helical span at residues 96 to 117; it reads LSSGLACGLAGLSAGMAIGIVG. Over 118–129 the chain is Cytoplasmic; the sequence is DAGVRANAQQPK. A helical transmembrane segment spans residues 130 to 155; sequence LFVGMILILIFAEALALYGLIVGIIL. Over 156–165 the chain is Lumenal; the sequence is SSRAGQSRAE.

It belongs to the V-ATPase proteolipid subunit family. In terms of assembly, V-ATPase is a heteromultimeric enzyme composed of a peripheral catalytic V1 complex (components A to H) attached to an integral membrane V0 proton pore complex (components: a, c, c'', d and e). The proteolipid components c and c'' are present as a hexameric ring that forms the proton-conducting pore. In terms of tissue distribution, expressed in leaf, root, flower and silique, with lower expression in roots.

Its subcellular location is the vacuole membrane. In terms of biological role, proton-conducting pore forming subunit of the membrane integral V0 complex of vacuolar ATPase. V-ATPase is responsible for acidifying a variety of intracellular compartments in eukaryotic cells. The sequence is that of V-type proton ATPase subunit c2 (VHA-c2) from Arabidopsis thaliana (Mouse-ear cress).